The following is a 155-amino-acid chain: Small ribosomal subunit protein uS7 (155 aa).

Belongs to the universal ribosomal protein uS7 family. Part of the 30S ribosomal subunit. Contacts proteins S9 and S11.

Its function is as follows. One of the primary rRNA binding proteins, it binds directly to 16S rRNA where it nucleates assembly of the head domain of the 30S subunit. Is located at the subunit interface close to the decoding center, probably blocks exit of the E-site tRNA. In Chlorobium luteolum (strain DSM 273 / BCRC 81028 / 2530) (Pelodictyon luteolum), this protein is Small ribosomal subunit protein uS7.